Here is a 374-residue protein sequence, read N- to C-terminus: Phosphatidylglycerol--prolipoprotein diacylglyceryl transferase (374 aa).

The next 4 membrane-spanning stretches (helical) occupy residues 33 to 53, 155 to 175, 195 to 215, and 222 to 242; these read ICFI…IALF, LCWF…VFFY, LASH…TSYI, and LSFL…AVFI. R243 contacts a 1,2-diacyl-sn-glycero-3-phospho-(1'-sn-glycerol). 3 consecutive transmembrane segments (helical) span residues 279–299, 306–326, and 341–361; these read PVQL…FTLW, LAAG…RFLL, and ILQM…CLVW.

It belongs to the Lgt family.

The protein localises to the cell inner membrane. It carries out the reaction L-cysteinyl-[prolipoprotein] + a 1,2-diacyl-sn-glycero-3-phospho-(1'-sn-glycerol) = an S-1,2-diacyl-sn-glyceryl-L-cysteinyl-[prolipoprotein] + sn-glycerol 1-phosphate + H(+). It participates in protein modification; lipoprotein biosynthesis (diacylglyceryl transfer). Functionally, catalyzes the transfer of the diacylglyceryl group from phosphatidylglycerol to the sulfhydryl group of the N-terminal cysteine of a prolipoprotein, the first step in the formation of mature lipoproteins. The protein is Phosphatidylglycerol--prolipoprotein diacylglyceryl transferase of Protochlamydia amoebophila (strain UWE25).